The chain runs to 207 residues: MAEDLDELLDEVESKFCRPDPLRLGTVERPRGGGGGFFGHDQNRAEAKENLRSAETFEKEDDLDSLINEIFEEPHFDKKHFKLKSKSSGNTSVRASIQGLGKSCSPVYIGGSTVPCGIGTNASPRACDHLRCTACDFWVESYDDYRWDKSCDYLFFRNNMPEFHKLKTKLVKKKGTRAYACQCSWKAVEELTDLQTDHQLRWVCGKH.

The required for interaction with FAM161A stretch occupies residues M1–H75.

As to quaternary structure, interacts (via N-terminus) with FAM161A (via central region); the interaction is direct. Expressed in the retina (at protein level).

The protein resides in the cytoplasm. The protein localises to the photoreceptor inner segment. In terms of biological role, may be involved in photoreceptor outer segment disk morphogenesis. This chain is Cilia- and flagella-associated protein 418 (CFAP418), found in Bos taurus (Bovine).